Reading from the N-terminus, the 365-residue chain is DNA polymerase IV 1 (365 aa).

Residues 6-196 form the UmuC domain; the sequence is VLHIDMDYFF…LNVSKLWGIG (191 aa). Mg(2+) is bound by residues D10 and D113. Residue E114 is part of the active site.

It belongs to the DNA polymerase type-Y family. Monomer. The cofactor is Mg(2+).

The protein localises to the cytoplasm. The catalysed reaction is DNA(n) + a 2'-deoxyribonucleoside 5'-triphosphate = DNA(n+1) + diphosphate. In terms of biological role, poorly processive, error-prone DNA polymerase involved in untargeted mutagenesis. Copies undamaged DNA at stalled replication forks, which arise in vivo from mismatched or misaligned primer ends. These misaligned primers can be extended by PolIV. Exhibits no 3'-5' exonuclease (proofreading) activity. May be involved in translesional synthesis. The chain is DNA polymerase IV 1 (dbh1) from Methanosarcina mazei (strain ATCC BAA-159 / DSM 3647 / Goe1 / Go1 / JCM 11833 / OCM 88) (Methanosarcina frisia).